The chain runs to 152 residues: Flagellar assembly factor FliW (152 aa).

The protein belongs to the FliW family. In terms of assembly, interacts with translational regulator CsrA and flagellin(s).

The protein resides in the cytoplasm. Functionally, acts as an anti-CsrA protein, binds CsrA and prevents it from repressing translation of its target genes, one of which is flagellin. Binds to flagellin and participates in the assembly of the flagellum. The chain is Flagellar assembly factor FliW from Caldicellulosiruptor bescii (strain ATCC BAA-1888 / DSM 6725 / KCTC 15123 / Z-1320) (Anaerocellum thermophilum).